We begin with the raw amino-acid sequence, 298 residues long: 1D-myo-inositol 2-acetamido-2-deoxy-alpha-D-glucopyranoside deacetylase (298 aa).

Zn(2+) contacts are provided by His14, Asp17, and His148. The interval 277 to 298 (RGPAGPDGREHDLFAGLDGPAT) is disordered.

The protein belongs to the MshB deacetylase family. Zn(2+) is required as a cofactor.

It carries out the reaction 1D-myo-inositol 2-acetamido-2-deoxy-alpha-D-glucopyranoside + H2O = 1D-myo-inositol 2-amino-2-deoxy-alpha-D-glucopyranoside + acetate. Functionally, catalyzes the deacetylation of 1D-myo-inositol 2-acetamido-2-deoxy-alpha-D-glucopyranoside (GlcNAc-Ins) in the mycothiol biosynthesis pathway. The protein is 1D-myo-inositol 2-acetamido-2-deoxy-alpha-D-glucopyranoside deacetylase of Nocardia farcinica (strain IFM 10152).